An 86-amino-acid chain; its full sequence is Small ribosomal subunit protein bS20 (86 aa).

The tract at residues 1-25 (MANIKSQQKRNKTNERARLRNKSVK) is disordered.

The protein belongs to the bacterial ribosomal protein bS20 family.

In terms of biological role, binds directly to 16S ribosomal RNA. The protein is Small ribosomal subunit protein bS20 of Mycobacterium avium (strain 104).